The following is a 276-amino-acid chain: Insulin-like growth factor-binding protein 2-A (276 aa).

Residues M1–S22 form the signal peptide. Positions M24–K105 constitute an IGFBP N-terminal domain. 9 cysteine pairs are disulfide-bonded: C28/C55, C31/C57, C39/C58, C46/C61, C69/C82, C76/C102, C180/C214, C225/C236, and C238/C259. The Thyroglobulin type-1 domain maps to Q177–C259. Positions R254–D256 match the Cell attachment site motif.

In terms of assembly, interacts equally well with igf1 and igf2. In terms of tissue distribution, in embryos at 24 hpf, initially expressed in the lens and cranial region, and at 48 and 72 hpf in the brain boundary vasculature. Expression in these regions persists throughout the hatching period and by 96 hpf expression is most abundant in the liver. In both male and female adults, highest expression is in the liver with modest expression in the brain. In male but not females adults, expressed at a low level in muscle and gonad. Also expressed in the adult intestine.

Its subcellular location is the secreted. Its function is as follows. IGF-binding proteins prolong the half-life of the IGFs and have been shown to either inhibit or stimulate the growth promoting effects of the IGFs on cell culture. They alter the interaction of IGFs with their cell surface receptors. The protein is Insulin-like growth factor-binding protein 2-A (igfbp2a) of Danio rerio (Zebrafish).